The sequence spans 295 residues: Proline-rich protein 32 (295 aa).

Disordered regions lie at residues 10–48 (GHAP…GHPG) and 101–120 (ATGE…SGQD).

The polypeptide is Proline-rich protein 32 (PRR32) (Bos taurus (Bovine)).